A 168-amino-acid chain; its full sequence is Photosystem I assembly protein Ycf3 (168 aa).

TPR repeat units lie at residues 35–68, 72–105, and 120–153; these read AFTY…EMDP, SYIL…NPFL, and GEQA…TPGN.

This sequence belongs to the Ycf3 family.

Its subcellular location is the plastid. It localises to the chloroplast thylakoid membrane. In terms of biological role, essential for the assembly of the photosystem I (PSI) complex. May act as a chaperone-like factor to guide the assembly of the PSI subunits. The chain is Photosystem I assembly protein Ycf3 from Plantago lanceolata (English plantain).